The primary structure comprises 133 residues: Agglutinin alpha chain (133 aa).

Residues 1–133 form the Jacalin-type lectin domain; it reads GVTFDDGAYT…LDYFSIYLSL (133 aa).

Belongs to the jacalin lectin family. As to quaternary structure, formed of four alpha chains and four beta chains.

Its function is as follows. D-galactose-specific lectin, binds the T-antigen structure Gal-beta1,3-GalNAc. The protein is Agglutinin alpha chain of Maclura pomifera (Osage orange).